Here is a 241-residue protein sequence, read N- to C-terminus: Zinc finger CCHC domain-containing protein 17 (241 aa).

The 73-residue stretch at 16–88 (YTIFQGEVAM…DRIKVSLSMK (73 aa)) folds into the S1 motif domain. Ser114 is subject to Phosphoserine. The segment at 131–148 (TTCKKCGCKGHFAKDCFM) adopts a CCHC-type zinc-finger fold. Lys144 is modified (N6-acetyllysine). The interval 161 to 241 (EEEEKEEAKS…KKKHKKKHKE (81 aa)) is disordered. Over residues 166–178 (EEAKSAEFEKPDP) the composition is skewed to basic and acidic residues. A compositionally biased stretch (basic residues) spans 182 to 198 (PSRKRKKEKKKKKHRDR). Position 183 is a phosphoserine (Ser183). The span at 211 to 225 (DTGKRARHTSKDSKA) shows a compositional bias: basic and acidic residues. Basic residues predominate over residues 226–241 (AKKKKKKKKHKKKHKE).

As to quaternary structure, interacts with PNN. Associates with the 60S ribosomal subunit.

Its subcellular location is the nucleus. The protein resides in the nucleolus. This chain is Zinc finger CCHC domain-containing protein 17 (ZCCHC17), found in Homo sapiens (Human).